Consider the following 431-residue polypeptide: MTRPLLSPEWVARLKQFKKLIVGFSGGLDSTVLLHVLASTPPLSNQLLAVHINHGISGNSLNWQRHCEQLCLDLGIAFIAKAIEFDRSANVEEAARNARYDFFSSLLEDNDCLVLGHHLDDQAETVLLQLFRGAGVDGLAAMQECSNLGAGQLARPFLTCPRVELEHYARIHELKWIEDESNQDTKYSRNYLRHRVMPLLLEKWPGVAGNISRAATHCQQAKANLEVLAIKDCPDLLNATDHLLIEPIKGLEFERITNVLKFWLKKNRIQLPSSKTFHRIIHEIIFAKLDAMPTVSWNQIQVRRFQQHLYLLKADQINLPKAIKWQQFPASLTYPDADIKLSAVKAQKGLMIPKDAQIEIRFRKGGEEIYWHGQTKHLKKLFQEWQIPPWVRDRVPLVYINDQLACVVGYAVSDLFFTTNPLEAWSIVNNS.

25 to 30 (SGGLDS) provides a ligand contact to ATP.

Belongs to the tRNA(Ile)-lysidine synthase family.

Its subcellular location is the cytoplasm. The catalysed reaction is cytidine(34) in tRNA(Ile2) + L-lysine + ATP = lysidine(34) in tRNA(Ile2) + AMP + diphosphate + H(+). Its function is as follows. Ligates lysine onto the cytidine present at position 34 of the AUA codon-specific tRNA(Ile) that contains the anticodon CAU, in an ATP-dependent manner. Cytidine is converted to lysidine, thus changing the amino acid specificity of the tRNA from methionine to isoleucine. The protein is tRNA(Ile)-lysidine synthase of Legionella pneumophila (strain Paris).